Reading from the N-terminus, the 212-residue chain is Orotate phosphoribosyltransferase (212 aa).

5-phospho-alpha-D-ribose 1-diphosphate is bound by residues arginine 97, lysine 101, histidine 103, and 123–131; that span reads EDLISTGGS. Residue serine 127 participates in orotate binding.

This sequence belongs to the purine/pyrimidine phosphoribosyltransferase family. PyrE subfamily. In terms of assembly, homodimer. The cofactor is Mg(2+).

The catalysed reaction is orotidine 5'-phosphate + diphosphate = orotate + 5-phospho-alpha-D-ribose 1-diphosphate. The protein operates within pyrimidine metabolism; UMP biosynthesis via de novo pathway; UMP from orotate: step 1/2. Its function is as follows. Catalyzes the transfer of a ribosyl phosphate group from 5-phosphoribose 1-diphosphate to orotate, leading to the formation of orotidine monophosphate (OMP). In Bacteroides fragilis (strain ATCC 25285 / DSM 2151 / CCUG 4856 / JCM 11019 / LMG 10263 / NCTC 9343 / Onslow / VPI 2553 / EN-2), this protein is Orotate phosphoribosyltransferase.